A 166-amino-acid chain; its full sequence is Ribonuclease P protein component (166 aa).

The protein belongs to the RnpA family. In terms of assembly, consists of a catalytic RNA component (M1 or rnpB) and a protein subunit.

The enzyme catalyses Endonucleolytic cleavage of RNA, removing 5'-extranucleotides from tRNA precursor.. Its function is as follows. RNaseP catalyzes the removal of the 5'-leader sequence from pre-tRNA to produce the mature 5'-terminus. It can also cleave other RNA substrates such as 4.5S RNA. The protein component plays an auxiliary but essential role in vivo by binding to the 5'-leader sequence and broadening the substrate specificity of the ribozyme. This chain is Ribonuclease P protein component, found in Helicobacter pylori (strain HPAG1).